Here is a 328-residue protein sequence, read N- to C-terminus: Ubiquitin carboxyl-terminal hydrolase isozyme L5 (328 aa).

One can recognise a UCH catalytic domain in the interval 7–225 (EWCLMESDPG…IRFNLMAIVS (219 aa)). Residue Lys47 is modified to N6-succinyllysine. Cys88 functions as the Nucleophile in the catalytic mechanism. An N6-acetyllysine modification is found at Lys158. His164 acts as the Proton donor in catalysis. Position 288 is an N6-succinyllysine (Lys288). One can recognise a ULD domain in the interval 290 to 318 (NYLPFIMELLKTLAEHQQLIPLVEKAKEK). Residues 312–328 (VEKAKEKQNAKKAQETK) are interaction with ADRM1.

This sequence belongs to the peptidase C12 family. Component of the 19S (PA700) regulatory complex of the 26S proteasome. Interacts with ADRM1 and NFRKB. Component of the INO80 complex; specifically part of a complex module associated with N-terminus of INO80.

Its subcellular location is the cytoplasm. The protein localises to the nucleus. It catalyses the reaction Thiol-dependent hydrolysis of ester, thioester, amide, peptide and isopeptide bonds formed by the C-terminal Gly of ubiquitin (a 76-residue protein attached to proteins as an intracellular targeting signal).. Its activity is regulated as follows. Activated by ADRM1. Inhibited by interaction with NFRKB. Protease that specifically cleaves 'Lys-48'-linked polyubiquitin chains. Deubiquitinating enzyme associated with the 19S regulatory subunit of the 26S proteasome. Putative regulatory component of the INO80 complex; however is inactive in the INO80 complex and is activated by a transient interaction of the INO80 complex with the proteasome via ADRM1. The sequence is that of Ubiquitin carboxyl-terminal hydrolase isozyme L5 (UCHL5) from Bos taurus (Bovine).